The primary structure comprises 541 residues: DEAD-box ATP-dependent RNA helicase 57 (541 aa).

A compositionally biased stretch (acidic residues) spans 43–52 (VEEEEDTEQP). The disordered stretch occupies residues 43–72 (VEEEEDTEQPEAEKVIVSSKKRKRRSSNSV). The Q motif signature appears at 141-169 (ELSSRYGCEGYILRNLAELGFKEPTPIQR). Residues 172–342 (IPILLSGREC…RSIMHDAVRV (171 aa)) enclose the Helicase ATP-binding domain. 185–192 (APTGSGKT) is a binding site for ATP. The DEAD box motif lies at 289–292 (DESD). In terms of domain architecture, Helicase C-terminal spans 370–514 (ALRQSFAESL…EVPSWIMSLK (145 aa)). Positions 517-541 (KWRKHRPRRDSISTKPKADKNDTDE) are disordered. Over residues 525–541 (RDSISTKPKADKNDTDE) the composition is skewed to basic and acidic residues.

This sequence belongs to the DEAD box helicase family. DDX52/ROK1 subfamily.

The enzyme catalyses ATP + H2O = ADP + phosphate + H(+). The chain is DEAD-box ATP-dependent RNA helicase 57 (RH57) from Arabidopsis thaliana (Mouse-ear cress).